Consider the following 370-residue polypeptide: Uroporphyrinogen decarboxylase (370 aa).

Substrate contacts are provided by residues R29–R33, D79, Y155, S210, and H342.

It belongs to the uroporphyrinogen decarboxylase family. Homodimer.

It localises to the cytoplasm. It carries out the reaction uroporphyrinogen III + 4 H(+) = coproporphyrinogen III + 4 CO2. It participates in porphyrin-containing compound metabolism; protoporphyrin-IX biosynthesis; coproporphyrinogen-III from 5-aminolevulinate: step 4/4. Its function is as follows. Catalyzes the decarboxylation of four acetate groups of uroporphyrinogen-III to yield coproporphyrinogen-III. The polypeptide is Uroporphyrinogen decarboxylase (Variovorax paradoxus (strain S110)).